A 208-amino-acid chain; its full sequence is N-(5'-phosphoribosyl)anthranilate isomerase (208 aa).

Belongs to the TrpF family.

The catalysed reaction is N-(5-phospho-beta-D-ribosyl)anthranilate = 1-(2-carboxyphenylamino)-1-deoxy-D-ribulose 5-phosphate. Its pathway is amino-acid biosynthesis; L-tryptophan biosynthesis; L-tryptophan from chorismate: step 3/5. In Chlamydia trachomatis serovar L2 (strain ATCC VR-902B / DSM 19102 / 434/Bu), this protein is N-(5'-phosphoribosyl)anthranilate isomerase.